The chain runs to 371 residues: Leucine-rich repeat-containing protein 2 (371 aa).

LRR repeat units lie at residues 122-143 (HLREWYISNTLIQIIPTYIQLF), 145-166 (AMRILDLPKNQISHLPAEIGCL), 168-189 (NLKELNVGFNYLKSIPPELGDC), 191-214 (NLERLDCSGNLELMELPFELSNLK), 215-235 (QVTFVDISANKFSSVPICVLR), 238-260 (NLQWLDISSNNLTDLPQDIDRLE), 261-283 (ELQSFLLYKNKLTYLPYSMLNLK), 284-305 (KLTLLVVSGDHLVELPTALCDS), and 308-329 (PLKFVSLMDNPIDNAQCEDGNE).

This is Leucine-rich repeat-containing protein 2 (LRRC2) from Homo sapiens (Human).